We begin with the raw amino-acid sequence, 349 residues long: DNA polymerase IV (349 aa).

The UmuC domain maps to 3 to 187 (VLFVDFDYFF…LDISKVPGVG (185 aa)). Mg(2+) contacts are provided by Asp-7 and Asp-105. Residue Glu-106 is part of the active site.

This sequence belongs to the DNA polymerase type-Y family. Monomer. The cofactor is Mg(2+).

The protein localises to the cytoplasm. It catalyses the reaction DNA(n) + a 2'-deoxyribonucleoside 5'-triphosphate = DNA(n+1) + diphosphate. In terms of biological role, poorly processive, error-prone DNA polymerase involved in untargeted mutagenesis. Copies undamaged DNA at stalled replication forks, which arise in vivo from mismatched or misaligned primer ends. These misaligned primers can be extended by PolIV. Exhibits no 3'-5' exonuclease (proofreading) activity. May be involved in translesional synthesis. In Metallosphaera sedula (strain ATCC 51363 / DSM 5348 / JCM 9185 / NBRC 15509 / TH2), this protein is DNA polymerase IV.